The primary structure comprises 246 residues: MADS-box transcription factor 14 (246 aa).

One can recognise an MADS-box domain in the interval 1–61 (MGRGKVQLKR…GKLYKYATDS (61 aa)). One can recognise a K-box domain in the interval 88–178 (QGNWCHEYRK…QKELVEKQKV (91 aa)). A disordered region spans residues 180-199 (KQQVQWDQTQPQTSSSSSSF).

Highly expressed in sterile lemmas, at intermediate levels in stamens, and weakly in lemmas, paleas and carpels.

It is found in the nucleus. Probable transcription factor. This is MADS-box transcription factor 14 (MADS14) from Oryza sativa subsp. indica (Rice).